A 707-amino-acid polypeptide reads, in one-letter code: Molybdenum cofactor sulfurase (707 aa).

An N6-(pyridoxal phosphate)lysine modification is found at lysine 206. The active site involves cysteine 365. Residues 558 to 705 (QWLENALDMT…VEAGSAVRFF (148 aa)) enclose the MOSC domain.

It belongs to the class-V pyridoxal-phosphate-dependent aminotransferase family. MOCOS subfamily. Requires pyridoxal 5'-phosphate as cofactor.

It catalyses the reaction Mo-molybdopterin + L-cysteine + AH2 = thio-Mo-molybdopterin + L-alanine + A + H2O. It participates in cofactor biosynthesis; molybdopterin biosynthesis. Functionally, sulfurates the molybdenum cofactor. Sulfation of molybdenum is essential for xanthine dehydrogenase (XDH) and aldehyde oxidase (ADO) enzymes in which molybdenum cofactor is liganded by 1 oxygen and 1 sulfur atom in active form. This Caenorhabditis briggsae protein is Molybdenum cofactor sulfurase (mocs-1).